A 303-amino-acid chain; its full sequence is Ribosomal RNA small subunit methyltransferase H (303 aa).

S-adenosyl-L-methionine contacts are provided by residues 33–35 (GGH), Asp52, Phe79, Asp97, and Gln104.

Belongs to the methyltransferase superfamily. RsmH family.

It localises to the cytoplasm. The catalysed reaction is cytidine(1402) in 16S rRNA + S-adenosyl-L-methionine = N(4)-methylcytidine(1402) in 16S rRNA + S-adenosyl-L-homocysteine + H(+). Specifically methylates the N4 position of cytidine in position 1402 (C1402) of 16S rRNA. This chain is Ribosomal RNA small subunit methyltransferase H, found in Wolinella succinogenes (strain ATCC 29543 / DSM 1740 / CCUG 13145 / JCM 31913 / LMG 7466 / NCTC 11488 / FDC 602W) (Vibrio succinogenes).